We begin with the raw amino-acid sequence, 362 residues long: MAMKKLLWVVLSLSLVLGVANSFDFHEKDLESEESLWDLYERWRSHHTVSRSLGEKHKRFNVFKANVMHVHNTNKMDKPYKLKLNKFADMTNHEFRSTYAGSKVNHHKMFRGSQHGSGTFMYEKVGSVPASVDWRKKGAVTDVKDQGQCGSCWAFSTIVAVEGINQIKTNKLVSLSEQELVDCDKEENQGCNGGLMESAFEFIKQKGGITTESNYPYTAQEGTCDESKVNDLAVSIDGHENVPVNDENALLKAVANQPVSVAIDAGGSDFQFYSEGVFTGDCNTDLNHGVAIVGYGTTVDGTNYWIVRNSWGPEWGEQGYIRMQRNISKKEGLCGIAMMASYPIKNSSDNPTGSLSSPKDEL.

The N-terminal stretch at 1–20 (MAMKKLLWVVLSLSLVLGVA) is a signal peptide. The propeptide at 21-126 (NSFDFHEKDL…SGTFMYEKVG (106 aa)) is activation peptide. Cystine bridges form between C149-C191, C183-C224, and C282-C334. C152 is a catalytic residue. Active-site residues include H288 and N309. Residues N326 and N346 are each glycosylated (N-linked (GlcNAc...) asparagine). Positions 353 to 362 (GSLSSPKDEL) are cleaved as a propeptide — removed in mature form. The short motif at 359-362 (KDEL) is the Prevents secretion from ER element.

This sequence belongs to the peptidase C1 family. The mature protein is not glycosylated. Post-translationally, the precursor stored in the endoplasmic reticulum lumen is processed during the transport to proteins bodies to two dominant mature forms that differ by a single amino acid residue at the N-terminus.

It is found in the endoplasmic reticulum lumen. The protein localises to the vacuole. The protein resides in the aleurone grain. Functionally, thought to be involved in the hydrolysis of stored seed proteins. In vitro, catalyzes the hydrolysis of proteins, such as azocasein. Shows a preferential cleavage for Asn-|-Xaa in small molecule substrates such as Boc-Asn-|-OPHNO(2). In Vigna mungo (Black gram), this protein is Vignain.